The following is a 120-amino-acid chain: FK506-binding protein 1A (120 aa).

One can recognise a PPIase FKBP-type domain in the interval glycine 26–lysine 114.

Belongs to the FKBP-type PPIase family. FKBP1 subfamily.

Its subcellular location is the cytoplasm. The enzyme catalyses [protein]-peptidylproline (omega=180) = [protein]-peptidylproline (omega=0). Its function is as follows. PPIases accelerate the folding of proteins. It catalyzes the cis-trans isomerization of proline imidic peptide bonds in oligopeptides. The polypeptide is FK506-binding protein 1A (fkr-2) (Neurospora crassa (strain ATCC 24698 / 74-OR23-1A / CBS 708.71 / DSM 1257 / FGSC 987)).